Here is a 379-residue protein sequence, read N- to C-terminus: Cytochrome b (379 aa).

4 consecutive transmembrane segments (helical) span residues 33–53 (FGSL…FLAM), 77–98 (WLIR…YLHI), 113–133 (WNIG…GYVL), and 178–198 (FFAF…LHLL). Residues His-83 and His-97 each contribute to the heme b site. The heme b site is built by His-182 and His-196. His-201 lines the a ubiquinone pocket. 4 consecutive transmembrane segments (helical) span residues 226–246 (YKDL…ALFY), 288–308 (LGGV…PILH), 320–340 (ASQL…WIGG), and 347–367 (YIII…VLNP).

It belongs to the cytochrome b family. In terms of assembly, the cytochrome bc1 complex contains 3 respiratory subunits (MT-CYB, CYC1 and UQCRFS1), 2 core proteins (UQCRC1 and UQCRC2) and probably 6 low-molecular weight proteins. It depends on heme b as a cofactor.

The protein localises to the mitochondrion inner membrane. In terms of biological role, component of the ubiquinol-cytochrome c reductase complex (complex III or cytochrome b-c1 complex) that is part of the mitochondrial respiratory chain. The b-c1 complex mediates electron transfer from ubiquinol to cytochrome c. Contributes to the generation of a proton gradient across the mitochondrial membrane that is then used for ATP synthesis. This Anguilla rostrata (American eel) protein is Cytochrome b (mt-cyb).